The following is a 454-amino-acid chain: Guanine deaminase (454 aa).

Residues His-82 and His-84 each coordinate Zn(2+). Substrate contacts are provided by residues 84–87, 213–214, 240–243, and Asp-330; these read HASQ, RF, and HISE. Zn(2+) contacts are provided by His-240 and Asp-330. Ser-453 is modified (phosphoserine).

This sequence belongs to the metallo-dependent hydrolases superfamily. ATZ/TRZ family. Homodimer. Zn(2+) serves as cofactor.

The catalysed reaction is guanine + H2O + H(+) = xanthine + NH4(+). It functions in the pathway purine metabolism; guanine degradation; xanthine from guanine: step 1/1. Its function is as follows. Catalyzes the hydrolytic deamination of guanine, producing xanthine and ammonia. The protein is Guanine deaminase of Homo sapiens (Human).